A 119-amino-acid polypeptide reads, in one-letter code: Large ribosomal subunit protein uL18 (119 aa).

Belongs to the universal ribosomal protein uL18 family. Part of the 50S ribosomal subunit; part of the 5S rRNA/L5/L18/L25 subcomplex. Contacts the 5S and 23S rRNAs.

This is one of the proteins that bind and probably mediate the attachment of the 5S RNA into the large ribosomal subunit, where it forms part of the central protuberance. The polypeptide is Large ribosomal subunit protein uL18 (Mycoplasmoides gallisepticum (strain R(low / passage 15 / clone 2)) (Mycoplasma gallisepticum)).